A 1372-amino-acid polypeptide reads, in one-letter code: MVSLRDNIEVQPLSHNKRVRKNFGHINLVADIPNLIEIQKNSYEKNFLQLDTKDSERKNKGLQSILNSIFPISDPSNIANLEFVKYEFDTPKYDVEECTQRSLSYDSALKVTLRLSIWDIDEDTGSREIKGIKEQQVYMGNIPLMTKNGTFIINGTERVVVSQMHRSPGVFFYHDEGKVHSSRKLLYSARVIPYRGSWLDLEFDAKDIIYFRIDRKRKLYATTLLKAIGMSTEEIIKFYYDSVNYKVVKNKGWAVKFMPSHITAHRLTSDLIDADTGNVLLKAGQKITPRLAKKYAGEGLNNILVSHKALIGKYLSEDLKDPESDEILAKIGEMITVELLSVISDLKIKNISVLVINPQSGPYIRNTLFSDKNQDRESALFDIFRVLRPGEPANIEAAESLFYNLFFDPERYDLSEVGRIKMNSRLELNISDETTVLTTDDIKNILRVLVELKDRKGIIDDIDHLGNRRVRSVGELIENQFRIGLVRMEKSVVERMSAGDIDTVMPHDLVNSKILVSVVKEFFSTSQLSQFMDQTNPLSEITHKRRLSALGPGGLSRDRAGFEVRDVHPTHYGRICPIETPEGQNIGLINSMATYARINKHGFIESPYRKVKDGHVTDEVVYLSAIEEGKYKIGQANSKVDKDGILQGEFINCRVEGGNFVMVEPHEVDFIDVTPMQVVSVAASLIPFLENDDANRALMGSNMQRQAVPLIKTDAPFVGTGVEGVVAKDSGASVLALNDGIVEQVDSNRIVIRAIAQKTESAPSVDIYNLLKFQKSNHNTCINQKPLVKVGHYVKKNDIIADGPSTDNGEIALGRNVLVAFLPWNGYNFEDSILISERIVKEDVFTSVHIEEFEVIARDTRLGPEEITRDIPNVSEEALRHLDEVGIIYVGAEVKAGDILVGKVTPKSESPITPEEKLLRAIFGEKAFDVKDSSLHVPSGVSGTVVEVRVFSRRGVEKDQRAIAIEKQQIEKLAKDRDDELEIIEHFVFSWLEKLLVGQVSINGPKTVKTGQTITSEILKGLSKGQLWQFTVEDANVMNEIEQLKGHYDGKKEALNKRFATKVEKLQSGDDLPQGALKVVKVFIATKHKLQPGDKMAGRHGNKGVISRIVPEEDMPFLEDGTVVDIVLNPLGLPSRMNIGQVLETHLGWASVNLAKKIAGLVEEHKTKHASIEKIKKFLIELYGENINHILEKSDEEIISFCNEAAKGVYFATPVFDGAKVEDVKDMLRLAGQDLSGQVKLIDGRTGEYFDRLVTVGQKYLLKLHHLVDNKIHSRSIGPYSLVTQQPLGGKSHFGGQRFGEMECWALQAYGAAYTLQEMLTVKSDDVNGRIKIYDSIVRGENNFESGIPESFNVMIKEFRSLCLNVKLEVTS.

This sequence belongs to the RNA polymerase beta chain family. As to quaternary structure, the RNAP catalytic core consists of 2 alpha, 1 beta, 1 beta' and 1 omega subunit. When a sigma factor is associated with the core the holoenzyme is formed, which can initiate transcription.

The catalysed reaction is RNA(n) + a ribonucleoside 5'-triphosphate = RNA(n+1) + diphosphate. DNA-dependent RNA polymerase catalyzes the transcription of DNA into RNA using the four ribonucleoside triphosphates as substrates. The chain is DNA-directed RNA polymerase subunit beta from Rickettsia bellii (strain RML369-C).